We begin with the raw amino-acid sequence, 357 residues long: Holliday junction branch migration complex subunit RuvB (357 aa).

The disordered stretch occupies residues 1–20 (MDDHDDSPVSPSFLKSDGEI). The interval 1-185 (MDDHDDSPVS…FGFTGHMDFY (185 aa)) is large ATPase domain (RuvB-L). Residues Leu-24, Arg-25, Gly-66, Lys-69, Thr-70, Ser-71, 132–134 (EDF), Arg-175, Tyr-185, and Arg-222 contribute to the ATP site. A Mg(2+)-binding site is contributed by Thr-70. The tract at residues 186 to 256 (EPGELLRILE…VARAALEVYD (71 aa)) is small ATPAse domain (RuvB-S). A head domain (RuvB-H) region spans residues 259 to 357 (TLGLDRLDRA…TSQPTLDLFD (99 aa)). Residues Arg-314 and Arg-319 each contribute to the DNA site.

It belongs to the RuvB family. In terms of assembly, homohexamer. Forms an RuvA(8)-RuvB(12)-Holliday junction (HJ) complex. HJ DNA is sandwiched between 2 RuvA tetramers; dsDNA enters through RuvA and exits via RuvB. An RuvB hexamer assembles on each DNA strand where it exits the tetramer. Each RuvB hexamer is contacted by two RuvA subunits (via domain III) on 2 adjacent RuvB subunits; this complex drives branch migration. In the full resolvosome a probable DNA-RuvA(4)-RuvB(12)-RuvC(2) complex forms which resolves the HJ.

The protein localises to the cytoplasm. The catalysed reaction is ATP + H2O = ADP + phosphate + H(+). Its function is as follows. The RuvA-RuvB-RuvC complex processes Holliday junction (HJ) DNA during genetic recombination and DNA repair, while the RuvA-RuvB complex plays an important role in the rescue of blocked DNA replication forks via replication fork reversal (RFR). RuvA specifically binds to HJ cruciform DNA, conferring on it an open structure. The RuvB hexamer acts as an ATP-dependent pump, pulling dsDNA into and through the RuvAB complex. RuvB forms 2 homohexamers on either side of HJ DNA bound by 1 or 2 RuvA tetramers; 4 subunits per hexamer contact DNA at a time. Coordinated motions by a converter formed by DNA-disengaged RuvB subunits stimulates ATP hydrolysis and nucleotide exchange. Immobilization of the converter enables RuvB to convert the ATP-contained energy into a lever motion, pulling 2 nucleotides of DNA out of the RuvA tetramer per ATP hydrolyzed, thus driving DNA branch migration. The RuvB motors rotate together with the DNA substrate, which together with the progressing nucleotide cycle form the mechanistic basis for DNA recombination by continuous HJ branch migration. Branch migration allows RuvC to scan DNA until it finds its consensus sequence, where it cleaves and resolves cruciform DNA. This is Holliday junction branch migration complex subunit RuvB from Nocardia farcinica (strain IFM 10152).